Reading from the N-terminus, the 351-residue chain is Histidinol-phosphate aminotransferase (351 aa).

Position 221 is an N6-(pyridoxal phosphate)lysine (Lys221).

Belongs to the class-II pyridoxal-phosphate-dependent aminotransferase family. Histidinol-phosphate aminotransferase subfamily. In terms of assembly, homodimer. It depends on pyridoxal 5'-phosphate as a cofactor.

It carries out the reaction L-histidinol phosphate + 2-oxoglutarate = 3-(imidazol-4-yl)-2-oxopropyl phosphate + L-glutamate. It participates in amino-acid biosynthesis; L-histidine biosynthesis; L-histidine from 5-phospho-alpha-D-ribose 1-diphosphate: step 7/9. In Staphylococcus haemolyticus (strain JCSC1435), this protein is Histidinol-phosphate aminotransferase.